The following is an 871-amino-acid chain: Coatomer subunit gamma-2 (871 aa).

The span at 1 to 11 shows a compositional bias: basic and acidic residues; sequence MIKKFDKKDEE. The disordered stretch occupies residues 1 to 20; that stretch reads MIKKFDKKDEESGSGSNPFR. HEAT repeat units follow at residues 64–101, 283–320, 321–355, 356–392, 395–430, and 467–504; these read TEATEAFFAMTRLFQSNDQTLRRMCYLTIKEMATISED, RELAPAVSVLQLFCSSPKPALRYAAVRTLNKVAMKHPS, AVTACNLDLENLITDSNRSIATLAITTLLKTGSES, SVDRLMKQISSFVSEISDEFKVVVVQAISALCQKYPR, SVMMTFLSNMLRDDGGFEYKRAIVDCIIHIVEENPE, and PVPSKYIRFIFNRVVLENEAVRAAAVSALAKFGAQNEN. Thr594 is modified (phosphothreonine).

The protein belongs to the COPG family. As to quaternary structure, oligomeric complex. Binds to CDC42. Interacts with JAGN1. Interacts with TMED10 (via cytoplasmic domain).

It localises to the cytoplasm. Its subcellular location is the cytosol. The protein localises to the golgi apparatus membrane. The protein resides in the cytoplasmic vesicle. It is found in the COPI-coated vesicle membrane. The coatomer is a cytosolic protein complex that binds to dilysine motifs and reversibly associates with Golgi non-clathrin-coated vesicles, which further mediate biosynthetic protein transport from the ER, via the Golgi up to the trans Golgi network. Coatomer complex is required for budding from Golgi membranes, and is essential for the retrograde Golgi-to-ER transport of dilysine-tagged proteins. In mammals, the coatomer can only be recruited by membranes associated to ADP-ribosylation factors (ARFs), which are small GTP-binding proteins; the complex also influences the Golgi structural integrity, as well as the processing, activity, and endocytic recycling of LDL receptors. The chain is Coatomer subunit gamma-2 (COPG2) from Bos taurus (Bovine).